The primary structure comprises 219 residues: Protein-L-isoaspartate O-methyltransferase 2 (219 aa).

The active site involves S60.

This sequence belongs to the methyltransferase superfamily. L-isoaspartyl/D-aspartyl protein methyltransferase family.

It is found in the cytoplasm. The catalysed reaction is [protein]-L-isoaspartate + S-adenosyl-L-methionine = [protein]-L-isoaspartate alpha-methyl ester + S-adenosyl-L-homocysteine. In terms of biological role, catalyzes the methyl esterification of L-isoaspartyl residues in peptides and proteins that result from spontaneous decomposition of normal L-aspartyl and L-asparaginyl residues. It plays a role in the repair and/or degradation of damaged proteins. The chain is Protein-L-isoaspartate O-methyltransferase 2 (pcm2) from Archaeoglobus fulgidus (strain ATCC 49558 / DSM 4304 / JCM 9628 / NBRC 100126 / VC-16).